We begin with the raw amino-acid sequence, 337 residues long: Cysteine synthase 3 (337 aa).

Position 47 is an N6-(pyridoxal phosphate)lysine (K47). Pyridoxal 5'-phosphate contacts are provided by residues N78, 182 to 186 (GSSGT), and S270.

It belongs to the cysteine synthase/cystathionine beta-synthase family. Homodimer. The cofactor is pyridoxal 5'-phosphate.

The enzyme catalyses O-acetyl-L-serine + hydrogen sulfide = L-cysteine + acetate. It participates in amino-acid biosynthesis; L-cysteine biosynthesis; L-cysteine from L-serine: step 2/2. In terms of biological role, primarily catalyzes the formation of cysteine and acetate from O-acetylserine and hydrogen sulfide. Can also catalyze the formation of cysteine and acetate from S-sulfocysteine and hydrogen sulfide and the formation of cyanoalanine and hydrogen sulfide from either S-sulfocysteine or O-acetylserine and hydrogen cyanide. This is Cysteine synthase 3 from Caenorhabditis elegans.